We begin with the raw amino-acid sequence, 544 residues long: MAAKDVQFGNEVRQKMVNGVNILANAVRVTLGPKGRNVVVDRAFGGPHITKDGVTVAKEIELKDKFENMGAQMVKEVASKTNDVAGDGTTTATVLAQSIVAEGMKYVTAGMNPTDLKRGIDKAVAALVDELKNIAKPCDTSKEIAQVGSISANSDEQVGAIIAEAMEKVGKEGVITVEDGKSLENELDVVEGMQFDRGYLSPYFINDAEKQIAALDNPFVLLFDKKISNIRDLLPVLEQVAKASRPLLIIAEDVEGEALATLVVNNIRGILKTVAVKAPGFGDRRKAMLQDIAILTGGVVISEEVGLSLEKATLDDLGQAKRIEIGKENTTIIDGFGDAAQIEARVAEIRQQIETATSDYDKEKLQERVAKLAGGVAVIKVGAATEVEMKEKKDRVEDALHATRAAVEEGVVAGGGVALLRARAALENLHTGNADQDAGVQIVLRAVESPLRQIVANAGGEPSVVVNKVLEGKGNYGYNAGSGEYGDMIEMGVLDPAKVTRSALQHAASIAGLMLTTDCMIAEIPEDKPAVPDMGGMGGMGGMM.

Residues 30–33 (TLGP), lysine 51, 87–91 (DGTTT), glycine 415, and aspartate 495 each bind ATP.

This sequence belongs to the chaperonin (HSP60) family. In terms of assembly, forms a cylinder of 14 subunits composed of two heptameric rings stacked back-to-back. Interacts with the co-chaperonin GroES.

It localises to the cytoplasm. The enzyme catalyses ATP + H2O + a folded polypeptide = ADP + phosphate + an unfolded polypeptide.. In terms of biological role, together with its co-chaperonin GroES, plays an essential role in assisting protein folding. The GroEL-GroES system forms a nano-cage that allows encapsulation of the non-native substrate proteins and provides a physical environment optimized to promote and accelerate protein folding. The protein is Chaperonin GroEL of Neisseria meningitidis serogroup B (strain ATCC BAA-335 / MC58).